The sequence spans 202 residues: Peptidyl-tRNA hydrolase (202 aa).

Tyr-19 is a binding site for tRNA. His-24 functions as the Proton acceptor in the catalytic mechanism. TRNA contacts are provided by Tyr-70, Asn-72, and Asn-118.

It belongs to the PTH family. Monomer.

Its subcellular location is the cytoplasm. It catalyses the reaction an N-acyl-L-alpha-aminoacyl-tRNA + H2O = an N-acyl-L-amino acid + a tRNA + H(+). Hydrolyzes ribosome-free peptidyl-tRNAs (with 1 or more amino acids incorporated), which drop off the ribosome during protein synthesis, or as a result of ribosome stalling. Its function is as follows. Catalyzes the release of premature peptidyl moieties from peptidyl-tRNA molecules trapped in stalled 50S ribosomal subunits, and thus maintains levels of free tRNAs and 50S ribosomes. This Prochlorococcus marinus (strain NATL1A) protein is Peptidyl-tRNA hydrolase.